We begin with the raw amino-acid sequence, 399 residues long: UDP-N-acetylglucosamine--N-acetylmuramyl-(pentapeptide) pyrophosphoryl-undecaprenol N-acetylglucosamine transferase (399 aa).

UDP-N-acetyl-alpha-D-glucosamine is bound by residues 29–31 (TAG), N148, R185, S219, and Q318.

The protein belongs to the glycosyltransferase 28 family. MurG subfamily.

The protein resides in the cell membrane. The catalysed reaction is di-trans,octa-cis-undecaprenyl diphospho-N-acetyl-alpha-D-muramoyl-L-alanyl-D-glutamyl-meso-2,6-diaminopimeloyl-D-alanyl-D-alanine + UDP-N-acetyl-alpha-D-glucosamine = di-trans,octa-cis-undecaprenyl diphospho-[N-acetyl-alpha-D-glucosaminyl-(1-&gt;4)]-N-acetyl-alpha-D-muramoyl-L-alanyl-D-glutamyl-meso-2,6-diaminopimeloyl-D-alanyl-D-alanine + UDP + H(+). The protein operates within cell wall biogenesis; peptidoglycan biosynthesis. Functionally, cell wall formation. Catalyzes the transfer of a GlcNAc subunit on undecaprenyl-pyrophosphoryl-MurNAc-pentapeptide (lipid intermediate I) to form undecaprenyl-pyrophosphoryl-MurNAc-(pentapeptide)GlcNAc (lipid intermediate II). This Mycobacterium ulcerans (strain Agy99) protein is UDP-N-acetylglucosamine--N-acetylmuramyl-(pentapeptide) pyrophosphoryl-undecaprenol N-acetylglucosamine transferase.